The chain runs to 581 residues: Aspartate--tRNA ligase (581 aa).

Residue Glu170 coordinates L-aspartate. Residues 194-197 (QLFK) form an aspartate region. Position 216 (Arg216) interacts with L-aspartate. Residues 216 to 218 (RDE) and Gln225 contribute to the ATP site. Residue His439 coordinates L-aspartate. Glu468 contacts ATP. Residue Arg475 participates in L-aspartate binding. Position 520–523 (520–523 (GFDR)) interacts with ATP.

Belongs to the class-II aminoacyl-tRNA synthetase family. Type 1 subfamily. Homodimer.

It is found in the cytoplasm. It carries out the reaction tRNA(Asp) + L-aspartate + ATP = L-aspartyl-tRNA(Asp) + AMP + diphosphate. Its function is as follows. Catalyzes the attachment of L-aspartate to tRNA(Asp) in a two-step reaction: L-aspartate is first activated by ATP to form Asp-AMP and then transferred to the acceptor end of tRNA(Asp). The protein is Aspartate--tRNA ligase of Thermosipho melanesiensis (strain DSM 12029 / CIP 104789 / BI429).